We begin with the raw amino-acid sequence, 133 residues long: Protransforming growth factor alpha (133 aa).

An N-terminal signal peptide occupies residues 1–23; sequence MVPSAGQLALFALGIFLAVCQAL. Residues 24–38 constitute a propeptide, removed in mature form; it reads ENSTSALSDPPVAAA. At 24-97 the chain is on the extracellular side; it reads ENSTSALSDP…AVVAASQKKQ (74 aa). Asn-25 is a glycosylation site (N-linked (GlcNAc...) asparagine). One can recognise an EGF-like domain in the interval 42–82; sequence HFNDCPDSHTQFCFHGTCRFLLQEEKPACVCHSGYVGARCE. 3 disulfides stabilise this stretch: Cys-46–Cys-59, Cys-54–Cys-70, and Cys-72–Cys-81. The propeptide at 89-133 is removed in mature form; it reads VVAASQKKQAITALVVVTIVALAVLIITCVLIHCCEVRKHSVVVP. The helical transmembrane segment at 98–120 threads the bilayer; that stretch reads AITALVVVTIVALAVLIITCVLI. The Cytoplasmic segment spans residues 121 to 133; the sequence is HCCEVRKHSVVVP.

As to quaternary structure, interacts with the PDZ domains of MAGI3, SDCBP and SNTA1. The interaction with SDCBP, is required for the targeting to the cell surface. In the endoplasmic reticulum, in its immature form (i.e. with a prosegment and lacking full N-glycosylation), interacts with CNIH. In the Golgi apparatus, may form a complex with CNIH and GORASP2. Interacts (via cytoplasmic C-terminal domain) with NKD2. Skin.

It is found in the secreted. The protein resides in the extracellular space. The protein localises to the cell membrane. TGF alpha is a mitogenic polypeptide that is able to bind to the EGF receptor/EGFR and to act synergistically with TGF beta to promote anchorage-independent cell proliferation in soft agar. The polypeptide is Protransforming growth factor alpha (TGFA) (Ovis aries (Sheep)).